The following is a 350-amino-acid chain: Glycogenin-1 (350 aa).

At Thr2 the chain carries N-acetylthreonine. 4 residues coordinate UDP: Leu9, Thr11, Asn12, and Tyr15. The UDP-alpha-D-glucose site is built by Leu9, Thr11, Asn12, and Tyr15. Ser44 is subject to Phosphoserine. Arg77 serves as a coordination point for UDP. Residues Arg77, Lys86, Asp102, Ala103, Asp104, Asn133, Ser134, Asp160, Asp163, and Gln164 each coordinate UDP-alpha-D-glucose. Positions 102, 103, and 104 each coordinate UDP. Mn(2+) is bound at residue Asp102. Residue Asp104 participates in Mn(2+) binding. Residue Tyr195 is glycosylated (O-linked (Glc...) tyrosine). 3 residues coordinate UDP: His212, Gly215, and Lys218. Residue His212 participates in Mn(2+) binding. UDP-alpha-D-glucose contacts are provided by Gly215 and Lys218. The interaction with GYS1 stretch occupies residues 301–333; the sequence is SHLSLGEIPAMAQPFVSSEERKERWEQGQADYM.

The protein belongs to the glycosyltransferase 8 family. Glycogenin subfamily. Part of the GYS1-GYG1 complex, a heterooctamer composed of a tetramer of GYS1 and 2 dimers of GYG1, where each GYS1 protomer binds to one GYG1 subunit (via GYG1 C-terminus); the GYS1 tetramer may dissociate from GYG1 dimers to continue glycogen polymerization on its own. May also form a heterooctamer complex with GYS2 (via GYG1 C-terminus). Mn(2+) serves as cofactor. In terms of processing, self-glycosylated by the transfer of glucose residues from UDP-glucose to itself, forming an alpha-1,4-glycan of around 10 residues attached to Tyr-195. Post-translationally, phosphorylated. Highly expressed in skeletal muscle and heart, with lower levels in brain, lung, kidney and pancreas.

It is found in the cytoplasm. Its subcellular location is the nucleus. It catalyses the reaction L-tyrosyl-[glycogenin] + UDP-alpha-D-glucose = alpha-D-glucosyl-L-tyrosyl-[glycogenin] + UDP + H(+). The catalysed reaction is [1,4-alpha-D-glucosyl](n)-L-tyrosyl-[glycogenin] + UDP-alpha-D-glucose = [1,4-alpha-D-glucosyl](n+1)-L-tyrosyl-[glycogenin] + UDP + H(+). It functions in the pathway glycan biosynthesis; glycogen biosynthesis. Inhibited by palladium ions. Functionally, glycogenin participates in the glycogen biosynthetic process along with glycogen synthase and glycogen branching enzyme. It catalyzes the formation of a short alpha (1,4)-glucosyl chain covalently attached via a glucose 1-O-tyrosyl linkage to internal tyrosine residues and these chains act as primers for the elongation reaction catalyzed by glycogen synthase. This chain is Glycogenin-1, found in Homo sapiens (Human).